We begin with the raw amino-acid sequence, 375 residues long: Growth/differentiation factor 8 (375 aa).

An N-terminal signal peptide occupies residues 1-23 (MQKLQLCVYIYLFMLIVAGPVDL). The propeptide occupies 24 to 266 (NENSEQKENV…VTDTPKRSRR (243 aa)). N71 carries an N-linked (GlcNAc...) asparagine glycan. 4 cysteine pairs are disulfide-bonded: C272-C282, C281-C340, C309-C372, and C313-C374.

This sequence belongs to the TGF-beta family. In terms of assembly, homodimer; disulfide-linked. Interacts with WFIKKN2, leading to inhibit its activity. Interacts with FSTL3. In terms of processing, synthesized as large precursor molecule that undergoes proteolytic cleavage to generate an N-terminal propeptide and a disulfide linked C-terminal dimer, which is the biologically active molecule. The circulating form consists of a latent complex of the C-terminal dimer and other proteins, including its propeptide, which maintain the C-terminal dimer in a latent, inactive state. Ligand activation requires additional cleavage of the prodomain by a tolloid-like metalloproteinase.

Its subcellular location is the secreted. Functionally, acts specifically as a negative regulator of skeletal muscle growth. This Papio hamadryas (Hamadryas baboon) protein is Growth/differentiation factor 8 (MSTN).